The sequence spans 27 residues: Cysteine-rich venom protein tropirin (27 aa).

The protein belongs to the CRISP family. Post-translationally, contains 8 disulfide bonds. In terms of tissue distribution, expressed by the venom gland.

The protein localises to the secreted. Blocks contraction of smooth muscle elicited by high potassium-induced depolarization, but does not block caffeine-stimulated contraction. May target voltage-gated calcium channels on smooth muscle. This is Cysteine-rich venom protein tropirin from Tropidechis carinatus (Australian rough-scaled snake).